Consider the following 471-residue polypeptide: Tryptophanase (471 aa).

N6-acetyllysine is present on residues Lys-5, Lys-115, and Lys-156. Residue Lys-270 is modified to N6-(pyridoxal phosphate)lysine. Lys-450 carries the N6-acetyllysine modification.

It belongs to the beta-eliminating lyase family. In terms of assembly, homotetramer. Pyridoxal 5'-phosphate is required as a cofactor.

It carries out the reaction L-tryptophan + H2O = indole + pyruvate + NH4(+). It functions in the pathway amino-acid degradation; L-tryptophan degradation via pyruvate pathway; indole and pyruvate from L-tryptophan: step 1/1. The polypeptide is Tryptophanase (Escherichia coli (strain SMS-3-5 / SECEC)).